We begin with the raw amino-acid sequence, 132 residues long: Global transcriptional regulator Spx 2 (132 aa).

Cysteine 10 and cysteine 13 are joined by a disulfide.

Belongs to the ArsC family. Spx subfamily. As to quaternary structure, interacts with the C-terminal domain of the alpha subunit of the RNAP.

Its subcellular location is the cytoplasm. Its function is as follows. Global transcriptional regulator that plays a key role in stress response and exerts either positive or negative regulation of genes. Acts by interacting with the C-terminal domain of the alpha subunit of the RNA polymerase (RNAP). This interaction can enhance binding of RNAP to the promoter region of target genes and stimulate their transcription, or block interaction of RNAP with activator. The chain is Global transcriptional regulator Spx 2 from Lactococcus lactis subsp. lactis (strain IL1403) (Streptococcus lactis).